We begin with the raw amino-acid sequence, 72 residues long: Translation initiation factor IF-1 (72 aa).

The S1-like domain maps to 1-72; sequence MAKDDVIEVE…TRGRITYRFK (72 aa).

It belongs to the IF-1 family. Component of the 30S ribosomal translation pre-initiation complex which assembles on the 30S ribosome in the order IF-2 and IF-3, IF-1 and N-formylmethionyl-tRNA(fMet); mRNA recruitment can occur at any time during PIC assembly.

It is found in the cytoplasm. In terms of biological role, one of the essential components for the initiation of protein synthesis. Stabilizes the binding of IF-2 and IF-3 on the 30S subunit to which N-formylmethionyl-tRNA(fMet) subsequently binds. Helps modulate mRNA selection, yielding the 30S pre-initiation complex (PIC). Upon addition of the 50S ribosomal subunit IF-1, IF-2 and IF-3 are released leaving the mature 70S translation initiation complex. This is Translation initiation factor IF-1 from Streptococcus gordonii (strain Challis / ATCC 35105 / BCRC 15272 / CH1 / DL1 / V288).